Here is a 1418-residue protein sequence, read N- to C-terminus: Chromatin remodeling factor mit1 (1418 aa).

Positions 135–148 (DETASDSATSSSSD) are enriched in low complexity. Positions 135–156 (DETASDSATSSSSDTNKKVNRK) are disordered. The PHD-type zinc finger occupies 212–271 (VCVCVKCHGREHRSSGKNFVYCDHCSNVYHYDCSPLPSLNKETRNYSQQNGFICPLCSKN). The RING-type; atypical zinc-finger motif lies at 215–269 (CVKCHGREHRSSGKNFVYCDHCSNVYHYDCSPLPSLNKETRNYSQQNGFICPLCS). The region spanning 568–738 (YLRWYTHHPC…FNLLQFLNPM (171 aa)) is the Helicase ATP-binding domain. Residue 581–588 (DEMGLGKT) coordinates ATP. Positions 875-1034 (ILRLLVPKLI…QNHNSEKDLE (160 aa)) constitute a Helicase C-terminal domain.

It belongs to the SNF2/RAD54 helicase family. In terms of assembly, interacts with clr3.

It is found in the nucleus. The protein resides in the chromosome. Its subcellular location is the centromere. It localises to the telomere. Its function is as follows. Required for proper positioning of nucleosomes at heterochromatic loci and for transcriptional gene silencing (TGS) function of the Snf2/Hdac-containing repressor complex (SHREC). In Schizosaccharomyces pombe (strain 972 / ATCC 24843) (Fission yeast), this protein is Chromatin remodeling factor mit1 (mit1).